The sequence spans 259 residues: Hemin import ATP-binding protein HmuV (259 aa).

The ABC transporter domain occupies 8–242 (ISANNISYRI…KMIENVYGHK (235 aa)). 40–47 (GPNGAGKS) serves as a coordination point for ATP.

It belongs to the ABC transporter superfamily. Heme (hemin) importer (TC 3.A.1.14.5) family. The complex is composed of two ATP-binding proteins (HmuV), two transmembrane proteins (HmuU) and a solute-binding protein (HmuT).

The protein resides in the cell inner membrane. Part of the ABC transporter complex HmuTUV involved in hemin import. Responsible for energy coupling to the transport system. In Aliivibrio fischeri (strain ATCC 700601 / ES114) (Vibrio fischeri), this protein is Hemin import ATP-binding protein HmuV.